A 364-amino-acid chain; its full sequence is A-type ATP synthase subunit C (364 aa).

This sequence belongs to the V-ATPase V0D/AC39 subunit family. Has multiple subunits with at least A(3), B(3), C, D, E, F, H, I and proteolipid K(x).

Its subcellular location is the cell membrane. Its function is as follows. Component of the A-type ATP synthase that produces ATP from ADP in the presence of a proton gradient across the membrane. In Desulfurococcus sp. (strain SY), this protein is A-type ATP synthase subunit C.